The sequence spans 271 residues: uncharacterized protein (271 aa).

Positions 1–18 (MKGFFLIAGFLLFARALC) are cleaved as a signal peptide. Residues 19–187 (ASWNVEEGTL…FSPPPKRANY (169 aa)) lie on the Lumenal side of the membrane. A helical transmembrane segment spans residues 188–208 (FLSICFSVSVVVSLIGLLGVW). The Cytoplasmic portion of the chain corresponds to 209 to 230 (QKLLPKSNVYSVSSSSFARTFG). A helical transmembrane segment spans residues 231 to 251 (FASLAVAEILLFIYWTSLSIF). The Lumenal portion of the chain corresponds to 252–271 (QFGAYAAGVAIMCGIAAKSL).

Its subcellular location is the endoplasmic reticulum membrane. This is an uncharacterized protein from Schizosaccharomyces pombe (strain 972 / ATCC 24843) (Fission yeast).